A 362-amino-acid polypeptide reads, in one-letter code: 3-dehydroquinate synthase (362 aa).

NAD(+) is bound by residues 72 to 77, 106 to 110, 130 to 131, Lys-143, and Lys-152; these read DGEAHK, GVIGD, and TT. Residues Glu-185, His-248, and His-265 each coordinate Zn(2+).

It belongs to the sugar phosphate cyclases superfamily. Dehydroquinate synthase family. The cofactor is Co(2+). Zn(2+) serves as cofactor. NAD(+) is required as a cofactor.

Its subcellular location is the cytoplasm. It carries out the reaction 7-phospho-2-dehydro-3-deoxy-D-arabino-heptonate = 3-dehydroquinate + phosphate. The protein operates within metabolic intermediate biosynthesis; chorismate biosynthesis; chorismate from D-erythrose 4-phosphate and phosphoenolpyruvate: step 2/7. Its function is as follows. Catalyzes the conversion of 3-deoxy-D-arabino-heptulosonate 7-phosphate (DAHP) to dehydroquinate (DHQ). In Laribacter hongkongensis (strain HLHK9), this protein is 3-dehydroquinate synthase.